Reading from the N-terminus, the 93-residue chain is HIG1 domain family member 1A, mitochondrial (93 aa).

Residues 1-93 (MSTDTGVSLP…YREFWAKPKP (93 aa)) form the HIG1 domain. Ser-2 carries the N-acetylserine modification. Phosphoserine is present on Ser-8. A run of 2 helical transmembrane segments spans residues 26–46 (EAPF…YGLY) and 60–80 (LIHM…VGMG).

As to quaternary structure, associates with cytochrome c oxidase (COX, complex IV); proposed complex component. Also associates with respiratory chain supercomplexes.

It localises to the mitochondrion membrane. Its subcellular location is the mitochondrion inner membrane. Functionally, proposed subunit of cytochrome c oxidase (COX, complex IV), which is the terminal component of the mitochondrial respiratory chain that catalyzes the reduction of oxygen to water. May play a role in the assembly of respiratory supercomplexes. The protein is HIG1 domain family member 1A, mitochondrial (HIGD1A) of Homo sapiens (Human).